The following is a 176-amino-acid chain: Parathyroid hormone-related protein (176 aa).

The signal sequence occupies residues methionine 1–glycine 25. A propeptide spanning residues arginine 26 to arginine 37 is cleaved from the precursor. The important for receptor binding stretch occupies residues arginine 58 to asparagine 69. The segment at threonine 76–asparagine 157 is disordered. 2 stretches are compositionally biased toward polar residues: residues serine 77 to asparagine 91 and threonine 106 to lysine 116. Positions threonine 109–lysine 130 match the Nuclear localization signal motif. A compositionally biased stretch (basic residues) spans serine 123 to lysine 133.

This sequence belongs to the parathyroid hormone family.

It is found in the secreted. It localises to the cytoplasm. Its subcellular location is the nucleus. In terms of biological role, neuroendocrine peptide which is a critical regulator of cellular and organ growth, development, migration, differentiation and survival and of epithelial calcium ion transport. Acts by binding to its receptor, PTH1R, activating G protein-coupled receptor signaling. Regulates endochondral bone development and epithelial-mesenchymal interactions during the formation of the mammary glands and teeth. Required for skeletal homeostasis. Functionally, potent inhibitor of osteoclastic bone resorption. The polypeptide is Parathyroid hormone-related protein (PTHLH) (Gallus gallus (Chicken)).